The chain runs to 387 residues: Succinate--CoA ligase [ADP-forming] subunit beta (387 aa).

Residues lysine 46, 53–55 (GRG), glutamate 99, cysteine 102, and glutamate 107 each bind ATP. 2 residues coordinate Mg(2+): asparagine 196 and aspartate 210. Residues asparagine 261 and 318-320 (GIV) each bind substrate.

Belongs to the succinate/malate CoA ligase beta subunit family. As to quaternary structure, heterotetramer of two alpha and two beta subunits. It depends on Mg(2+) as a cofactor.

It catalyses the reaction succinate + ATP + CoA = succinyl-CoA + ADP + phosphate. The enzyme catalyses GTP + succinate + CoA = succinyl-CoA + GDP + phosphate. It functions in the pathway carbohydrate metabolism; tricarboxylic acid cycle; succinate from succinyl-CoA (ligase route): step 1/1. Succinyl-CoA synthetase functions in the citric acid cycle (TCA), coupling the hydrolysis of succinyl-CoA to the synthesis of either ATP or GTP and thus represents the only step of substrate-level phosphorylation in the TCA. The beta subunit provides nucleotide specificity of the enzyme and binds the substrate succinate, while the binding sites for coenzyme A and phosphate are found in the alpha subunit. The polypeptide is Succinate--CoA ligase [ADP-forming] subunit beta (Campylobacter hominis (strain ATCC BAA-381 / DSM 21671 / CCUG 45161 / LMG 19568 / NCTC 13146 / CH001A)).